A 122-amino-acid polypeptide reads, in one-letter code: Large ribosomal subunit protein uL14 (122 aa).

Belongs to the universal ribosomal protein uL14 family. As to quaternary structure, part of the 50S ribosomal subunit. Forms a cluster with proteins L3 and L19. In the 70S ribosome, L14 and L19 interact and together make contacts with the 16S rRNA in bridges B5 and B8.

Binds to 23S rRNA. Forms part of two intersubunit bridges in the 70S ribosome. The sequence is that of Large ribosomal subunit protein uL14 from Anaeromyxobacter dehalogenans (strain 2CP-1 / ATCC BAA-258).